The sequence spans 200 residues: Holliday junction branch migration complex subunit RuvA (200 aa).

Residues 1 to 63 (MIALVQGRVA…EDSLTLFGFA (63 aa)) are domain I. The tract at residues 64–138 (DADERDVFEL…DRLGPAQGAA (75 aa)) is domain II. Residues 138–142 (APAAP) are flexible linker. The segment at 143 to 200 (VAVDDGADVVDALVGLGWPVRQAQDAVRGVLEDADGTAPDAAGLLRAALRSLAGDARG) is domain III.

It belongs to the RuvA family. In terms of assembly, homotetramer. Forms an RuvA(8)-RuvB(12)-Holliday junction (HJ) complex. HJ DNA is sandwiched between 2 RuvA tetramers; dsDNA enters through RuvA and exits via RuvB. An RuvB hexamer assembles on each DNA strand where it exits the tetramer. Each RuvB hexamer is contacted by two RuvA subunits (via domain III) on 2 adjacent RuvB subunits; this complex drives branch migration. In the full resolvosome a probable DNA-RuvA(4)-RuvB(12)-RuvC(2) complex forms which resolves the HJ.

It is found in the cytoplasm. Functionally, the RuvA-RuvB-RuvC complex processes Holliday junction (HJ) DNA during genetic recombination and DNA repair, while the RuvA-RuvB complex plays an important role in the rescue of blocked DNA replication forks via replication fork reversal (RFR). RuvA specifically binds to HJ cruciform DNA, conferring on it an open structure. The RuvB hexamer acts as an ATP-dependent pump, pulling dsDNA into and through the RuvAB complex. HJ branch migration allows RuvC to scan DNA until it finds its consensus sequence, where it cleaves and resolves the cruciform DNA. The chain is Holliday junction branch migration complex subunit RuvA from Beutenbergia cavernae (strain ATCC BAA-8 / DSM 12333 / CCUG 43141 / JCM 11478 / NBRC 16432 / NCIMB 13614 / HKI 0122).